Consider the following 213-residue polypeptide: Probable GTP-binding protein EngB (213 aa).

The EngB-type G domain maps to 30-204 (EGFEVAFAGR…YTVLAGWMEL (175 aa)). Residues 38–45 (GRSNAGKS), 64–68 (GRTQL), 82–85 (DLPG), 149–152 (TKAD), and 182–185 (LFSA) each bind GTP. The Mg(2+) site is built by Ser45 and Thr66.

This sequence belongs to the TRAFAC class TrmE-Era-EngA-EngB-Septin-like GTPase superfamily. EngB GTPase family. Mg(2+) is required as a cofactor.

Functionally, necessary for normal cell division and for the maintenance of normal septation. This chain is Probable GTP-binding protein EngB, found in Pseudomonas fluorescens (strain ATCC BAA-477 / NRRL B-23932 / Pf-5).